Consider the following 142-residue polypeptide: Virulence-associated membrane protein 1 (142 aa).

The N-terminal stretch at 1 to 20 is a signal peptide; that stretch reads MRGILVALTAALIFCSLTPA. The chain crosses the membrane as a helical span at residues 59 to 79; sequence IAIAVGTALVTLVSAGVGGML.

Monomer.

It is found in the membrane. Its function is as follows. During infection, may play a role in establishing and maintaining biotrophy; the formation of a tight interaction zone between the host and the pathogen. The polypeptide is Virulence-associated membrane protein 1 (Mycosarcoma maydis (Corn smut fungus)).